Here is a 46-residue protein sequence, read N- to C-terminus: Defensin-like protein AX2 (46 aa).

4 cysteine pairs are disulfide-bonded: Cys3–Cys46, Cys14–Cys34, Cys20–Cys40, and Cys24–Cys42.

Leaves and flowers.

Functionally, strong inhibiting activity against C.beticola and other filamentous fungi. Little or no effect against bacteria. The polypeptide is Defensin-like protein AX2 (Beta vulgaris (Sugar beet)).